The sequence spans 447 residues: Dimethylsulfoniopropionate lyase DddP (447 aa).

The interval 1–26 (MNRHFNATRKIDPSRGATLGDGSPND) is disordered. Residues Asp295, Asp297, Asp307, His371, Glu406, and Glu421 each coordinate a divalent metal cation.

The protein belongs to the peptidase M24B family. In terms of assembly, homodimer. A divalent metal cation serves as cofactor.

The enzyme catalyses S,S-dimethyl-beta-propiothetin = acrylate + dimethyl sulfide + H(+). Functionally, able to cleave dimethylsulfoniopropionate (DMSP), releasing dimethyl sulfide (DMS). DMS is the principal form by which sulfur is transported from oceans to the atmosphere. The real activity of the protein is however subject to debate and it is unclear whether it constitutes a real dimethylsulfoniopropionate lyase in vivo: the low activity with DMSP as substrate suggests that DMSP is not its native substrate. This is Dimethylsulfoniopropionate lyase DddP from Roseobacter denitrificans (strain ATCC 33942 / OCh 114) (Erythrobacter sp. (strain OCh 114)).